A 239-amino-acid chain; its full sequence is Cysteine-rich venom protein ophanin (239 aa).

A signal peptide spans 1-18; it reads MIAFTLLSLAAVLQQSFG. An SCP domain is found at 37–165; it reads VDLHNSLRRS…EYSYFYVCQY (129 aa). 8 disulfide bridges follow: cysteine 74-cysteine 152, cysteine 91-cysteine 166, cysteine 147-cysteine 163, cysteine 185-cysteine 192, cysteine 188-cysteine 197, cysteine 201-cysteine 234, cysteine 210-cysteine 228, and cysteine 219-cysteine 232. The ShKT domain maps to 201–234; that stretch reads CTLYNEYTNCDSLVKQSSCQDEWIKSKCPASCFC.

Expressed by the venom gland.

It is found in the secreted. Functionally, weakly blocks contraction of smooth muscle elicited by high potassium-induced depolarization, but does not block caffeine-stimulated contraction. May target voltage-gated calcium channels on smooth muscle. In Ophiophagus hannah (King cobra), this protein is Cysteine-rich venom protein ophanin.